Here is a 941-residue protein sequence, read N- to C-terminus: 26S proteasome regulatory subunit RPN2 (941 aa).

PC repeat units follow at residues Ser-363–Phe-396, Gly-400–Asp-437, Gly-442–Glu-476, Ala-477–Thr-511, Gly-513–Tyr-546, Gly-547–Arg-582, Ala-583–Arg-615, Gly-617–Gln-651, Ala-652–Glu-689, and Gly-695–Ala-731. Residues Lys-808–Lys-854 form a disordered region. Positions Lys-816–Lys-854 are enriched in basic and acidic residues.

The protein belongs to the proteasome subunit S1 family.

In terms of biological role, acts as a regulatory subunit of the 26S proteasome which is involved in the ATP-dependent degradation of ubiquitinated proteins. This chain is 26S proteasome regulatory subunit RPN2 (RPN2), found in Candida glabrata (strain ATCC 2001 / BCRC 20586 / JCM 3761 / NBRC 0622 / NRRL Y-65 / CBS 138) (Yeast).